We begin with the raw amino-acid sequence, 154 residues long: RxLR effector protein PITG_12737 (154 aa).

The N-terminal stretch at 1–16 (MRVYFILILAVATVSG) is a signal peptide. Positions 42–58 (RLLRAELTTDETYPEER) match the RxLR-dEER motif.

This sequence belongs to the RxLR effector family.

Its subcellular location is the secreted. The protein resides in the host nucleus. The protein localises to the host cytoplasm. Its function is as follows. Effector that enhances P.infestans colonization of Nicotiana benthamiana leaves. The polypeptide is RxLR effector protein PITG_12737 (Phytophthora infestans (strain T30-4) (Potato late blight agent)).